Reading from the N-terminus, the 447-residue chain is uncharacterized protein (447 aa).

This is an uncharacterized protein from Mus musculus (Mouse).